The following is a 309-amino-acid chain: MEMO1 family protein C4H3.04c (309 aa).

It belongs to the MEMO1 family.

The chain is MEMO1 family protein C4H3.04c from Schizosaccharomyces pombe (strain 972 / ATCC 24843) (Fission yeast).